The chain runs to 137 residues: MSRSYPGEQVEHAFNSKRLKNWEVPAVDKSQAISTSTGTRFGTLQPRSGRTQFIVDDNGHLKSGVPKLEKSAFNFTQTTPVFMDSAPRWPKENPTWPKNMKATMGYKGIQSNYLPTNTVTLKAVEVPGTTERNFNFM.

It belongs to the Flattop family.

Its subcellular location is the cytoplasm. It is found in the cytoskeleton. The protein resides in the flagellum axoneme. Its function is as follows. Microtubule inner protein (MIP) part of the dynein-decorated doublet microtubules (DMTs) in cilia axoneme. Acts as a regulator of cilium basal body docking and positioning in mono- and multiciliated cells. Regulates basal body docking and cilia formation in multiciliated lung cells. Regulates kinocilium positioning and stereocilia bundle morphogenesis in the inner ear. In Chlamydomonas reinhardtii (Chlamydomonas smithii), this protein is Protein Flattop homolog.